Here is an 87-residue protein sequence, read N- to C-terminus: Large ribosomal subunit protein bL31B-2/bL31B-3 (87 aa).

Belongs to the bacterial ribosomal protein bL31 family. Type B subfamily. In terms of assembly, part of the 50S ribosomal subunit.

In Escherichia coli O157:H7, this protein is Large ribosomal subunit protein bL31B-2/bL31B-3 (rpmE2-2).